Here is a 263-residue protein sequence, read N- to C-terminus: Ribonuclease HII (263 aa).

Positions 71-262 constitute an RNase H type-2 domain; it reads QAIAGIDEVG…VKSMCCDSTN (192 aa). Residues D77, E78, and D172 each coordinate a divalent metal cation.

It belongs to the RNase HII family. The cofactor is Mn(2+). Requires Mg(2+) as cofactor.

The protein localises to the cytoplasm. The catalysed reaction is Endonucleolytic cleavage to 5'-phosphomonoester.. Functionally, endonuclease that specifically degrades the RNA of RNA-DNA hybrids. The polypeptide is Ribonuclease HII (Streptococcus pyogenes serotype M3 (strain ATCC BAA-595 / MGAS315)).